The chain runs to 107 residues: DNA polymerase delta subunit 4 (107 aa).

The PCNA-interaction protein motif (PIP box) motif lies at 1 to 16 (MGRKRLITDSYPVVKR). The tract at residues 1-44 (MGRKRLITDSYPVVKRREGPAGHSKGELAPELGEEPQPRDEEEA) is disordered. Residues 15–28 (KRREGPAGHSKGEL) are compositionally biased toward basic and acidic residues.

The protein belongs to the DNA polymerase delta subunit 4 family. In terms of assembly, component of the tetrameric DNA polymerase delta complex (Pol-delta4), which consists of POLD1/p125, POLD2/p50, POLD3/p66/p68 and POLD4/p12, with POLD1 bearing DNA polymerase and 3' to 5' proofreading exonuclease activities. Within this complex, directly interacts with POLD1 and POLD2. Directly interacts with PCNA, as do POLD1 and POLD3; this interaction stimulates Pol-delta4 polymerase activity. As POLD1 and POLD2, directly interacts with WRNIP1; this interaction stimulates DNA polymerase delta-mediated DNA synthesis, independently of the presence of PCNA. This stimulation may be due predominantly to an increase of initiation frequency and also to increased processivity. Upon genotoxic stress induced by DNA damaging agents or by replication stress, POLD4 is proteolytically degraded and Pol-delta4 is converted into a trimeric form of the complex (Pol-delta3) which has an increased proofreading activity. The DNA polymerase delta complex interacts with POLDIP2; this interaction is probably mediated through direct binding to POLD2. Ubiquitinated; undergoes 'Lys-48'-linked ubiquitination in response to UV irradiation, leading to proteasomal degradation. This modification is partly mediated by RNF8 and by the DCX(DTL) E3 ubiquitin ligase complex (also called CRL4(CDT2)). Efficient degradation requires the presence of PCNA and is required for the inhibition of fork progression after DNA damage.

The protein localises to the nucleus. Functionally, as a component of the tetrameric DNA polymerase delta complex (Pol-delta4), plays a role in high fidelity genome replication and repair. Within this complex, increases the rate of DNA synthesis and decreases fidelity by regulating POLD1 polymerase and proofreading 3' to 5' exonuclease activity. Pol-delta4 participates in Okazaki fragment processing, through both the short flap pathway, as well as a nick translation system. Under conditions of DNA replication stress, required for the repair of broken replication forks through break-induced replication (BIR), a mechanism that may induce segmental genomic duplications of up to 200 kb. Involved in Pol-delta4 translesion synthesis (TLS) of templates carrying O6-methylguanine or abasic sites. Its degradation in response to DNA damage is required for the inhibition of fork progression and cell survival. This chain is DNA polymerase delta subunit 4 (POLD4), found in Homo sapiens (Human).